A 220-amino-acid polypeptide reads, in one-letter code: Flagellin A2 (220 aa).

Positions methionine 1–glycine 11 are excised as a propeptide. N-linked (GlcNAc...) asparagine glycans are attached at residues asparagine 78, asparagine 95, asparagine 112, and asparagine 124.

Belongs to the archaeal flagellin family. In terms of processing, glycosylated by a pentasaccharide similar to the S-layer glycoprotein, probably comprising a hexose, 2 hexuronic acids, a methyl ester of a hexuronic acid and mannose.

The protein resides in the archaeal flagellum. Functionally, flagellin that plays both structural and regulatory roles in flagella biosynthesis. Does not constitute a major flagellin in terms of abundance contrary to FlgA1: may regulate the flagella-dependent swimming motility depending on the relative abundance of FlgA1. Not involved in PibD-dependent surface adhesion. This chain is Flagellin A2 (flgA2), found in Haloferax volcanii (strain ATCC 29605 / DSM 3757 / JCM 8879 / NBRC 14742 / NCIMB 2012 / VKM B-1768 / DS2) (Halobacterium volcanii).